The following is a 309-amino-acid chain: Elongation factor Ts (309 aa).

The interval 82-85 (TDFV) is involved in Mg(2+) ion dislocation from EF-Tu.

This sequence belongs to the EF-Ts family.

It is found in the cytoplasm. Functionally, associates with the EF-Tu.GDP complex and induces the exchange of GDP to GTP. It remains bound to the aminoacyl-tRNA.EF-Tu.GTP complex up to the GTP hydrolysis stage on the ribosome. The polypeptide is Elongation factor Ts (tsf) (Rickettsia prowazekii (strain Madrid E)).